The primary structure comprises 326 residues: Peroxidase 43 (326 aa).

A signal peptide spans 1 to 24 (MVWANAKMRLALSLVTVFFGISLA). Intrachain disulfides connect Cys35–Cys112, Cys68–Cys73, Cys118–Cys322, and Cys196–Cys228. His66 acts as the Proton acceptor in catalysis. Residues Asp67, Val70, Gly72, Asp74, and Ser76 each coordinate Ca(2+). Asn151 is a glycosylation site (N-linked (GlcNAc...) asparagine). Substrate is bound at residue Pro159. His189 provides a ligand contact to heme b. Residue Thr190 coordinates Ca(2+). Asp241, Ser244, and Asp249 together coordinate Ca(2+).

It belongs to the peroxidase family. Classical plant (class III) peroxidase subfamily. Heme b serves as cofactor. Requires Ca(2+) as cofactor.

It localises to the secreted. The enzyme catalyses 2 a phenolic donor + H2O2 = 2 a phenolic radical donor + 2 H2O. Its function is as follows. Removal of H(2)O(2), oxidation of toxic reductants, biosynthesis and degradation of lignin, suberization, auxin catabolism, response to environmental stresses such as wounding, pathogen attack and oxidative stress. These functions might be dependent on each isozyme/isoform in each plant tissue. The polypeptide is Peroxidase 43 (PER43) (Arabidopsis thaliana (Mouse-ear cress)).